The sequence spans 772 residues: MLSLKKYLTEGLLQFTILLSLIGVRVDVDTYLTSQLPPLREIILGPSSAYTQTQFHNLRNTLDGYGIHPKSIDLDNYFTARRLLSQVRALDRFQVPTTEVNAWLVHRDPEGSVSGSQPNSGLALESSSGLQDVTGPDNGVRESETEQGFGEDLEDLGAVAPPVSGDLTKEDIDLIDILWRQDIDLGAGREVFDYSHRQKEQDVEKELRDGGEQDTWAGEGAEALARNLLVDGETGESFPAQVPSGEDQTALSLEECLRLLEATCPFGENAEFPADISSITEAVPSESEPPALQNNLLSPLLTGTESPFDLEQQWQDLMSIMEMQAMEVNTSASEILYSAPPGDPLSTNYSLAPNTPINQNVSLHQASLGGCSQDFLLFSPEVESLPVASSSTLLPLAPSNSTSLNSTFGSTNLTGLFFPPQLNGTANDTAGPELPDPLGGLLDEAMLDEISLMDLAIEEGFNPVQASQLEEEFDSDSGLSLDSSHSPSSLSSSEGSSSSSSSSSSSSSSASSSASSSFSEEGAVGYSSDSETLDLEEAEGAVGYQPEYSKFCRMSYQDPAQLSCLPYLEHVGHNHTYNMAPSALDSADLPPPSALKKGSKEKQADFLDKQMSRDEHRARAMKIPFTNDKIINLPVEEFNELLSKYQLSEAQLSLIRDIRRRGKNKMAAQNCRKRKLDTILNLERDVEDLQRDKARLLREKVEFLRSLRQMKQKVQSLYQEVFGRLRDENGRPYSPSQYALQYAGDGSVLLIPRTMADQQARRQERKPKDRRK.

The helical; Signal-anchor for type II membrane protein transmembrane segment at 7-24 threads the bilayer; it reads YLTEGLLQFTILLSLIGV. Positions 108 to 148 are disordered; that stretch reads DPEGSVSGSQPNSGLALESSSGLQDVTGPDNGVRESETEQG. Over residues 113–131 the composition is skewed to polar residues; sequence VSGSQPNSGLALESSSGLQ. A cholesterol recognition/amino acid consensus (CRAC) region region spans residues 191-199; that stretch reads VFDYSHRQK. N-linked (GlcNAc...) asparagine glycosylation is found at N348 and N360. Residues 379 to 383 form a CPD region; sequence SPEVE. Residues N412 and N423 are each glycosylated (N-linked (GlcNAc...) asparagine). Disordered regions lie at residues 470-532 and 582-613; these read EEEF…DSET and SALD…QMSR. Residues 476-480 carry the Destruction motif motif; that stretch reads DSGLS. Positions 476–523 are enriched in low complexity; sequence DSGLSLDSSHSPSSLSSSEGSSSSSSSSSSSSSSASSSASSSFSEEGA. S528 is modified (phosphoserine; by CK2). Residues 598 to 613 are compositionally biased toward basic and acidic residues; sequence GSKEKQADFLDKQMSR. S599 bears the Phosphoserine; by PKA mark. The bZIP domain occupies 654 to 717; that stretch reads LIRDIRRRGK…RQMKQKVQSL (64 aa). Residues 656 to 675 are basic motif; the sequence is RDIRRRGKNKMAAQNCRKRK. The tract at residues 682-696 is leucine-zipper; that stretch reads LERDVEDLQRDKARL.

This sequence belongs to the bZIP family. CNC subfamily. In terms of assembly, interacts with KEAP1. As to quaternary structure, interacts (via CPD region) with FBXW7; leading to its ubiquitination and degradation. Interacts with SYVN1/HRD1; leading to its ubiquitination and degradation. Interacts (when ubiquitinated) with DDI2; leading to its cleavage. Interacts (via the bZIP domain) with small MAF protein (MAFF, MAFG or MAFK); required for binding to antioxidant response elements (AREs) on DNA. Interacts (via Destruction motif) with BTRC; leading to its ubiquitination and degradation. Interacts with CEBPB; the heterodimer represses expression of DSPP during odontoblast differentiation. Interacts with MOTS-c, a peptide produced by the mitochondrially encoded 12S rRNA MT-RNR1. Post-translationally, cleaved at Leu-104 by the aspartyl protease DDI2 following retrotranslocation, releasing the protein from the endoplasmic reticulum membrane and forming the transcription factor NRF1 that translocates into the nucleus. Ubiquitination is prerequisite for cleavage by aspartyl protease DDI2. N-glycosylated in normal conditions, when it has a single-pass type II membrane protein topology, with the DNA-binding domain facing the endoplasmic reticulum lumen. Deglycosylated during retrotranslocation to the cytosolic side of the membrane, to have a single-pass type III membrane protein topology with the major part of the protein facing the cytosol. In terms of processing, ubiquitinated by the SCF(FBXW7) complex and SYVN1/HRD1, leading to its degradation by the proteasome. Ubiquitinated during retrotranslocation to the cytosolic side of the membrane: ubiquitination does not lead to degradation and is required for processing by the aspartyl protease DDI2 and subsequent release from the endoplasmic reticulum membrane. Post-translationally, phosphorylation by CK2 at Ser-528 inhibits transcription factor activity, possibly by affecting DNA-binding activity. Phosphorylation at Ser-599 is required for interaction with CEBPB. Ubiquitinated by the SCF(BTRC) complex in the nucleus, leading to its degradation by the proteasome.

Its subcellular location is the endoplasmic reticulum membrane. It localises to the nucleus. Its function is as follows. Endoplasmic reticulum membrane sensor that translocates into the nucleus in response to various stresses to act as a transcription factor. Constitutes a precursor of the transcription factor NRF1. Able to detect various cellular stresses, such as cholesterol excess, oxidative stress or proteasome inhibition. In response to stress, it is released from the endoplasmic reticulum membrane following cleavage by the protease DDI2 and translocates into the nucleus to form the transcription factor NRF1. Acts as a key sensor of cholesterol excess: in excess cholesterol conditions, the endoplasmic reticulum membrane form of the protein directly binds cholesterol via its CRAC motif, preventing cleavage and release of the transcription factor NRF1, thereby allowing expression of genes promoting cholesterol removal, such as CD36. Involved in proteasome homeostasis: in response to proteasome inhibition, it is released from the endoplasmic reticulum membrane, translocates to the nucleus and activates expression of genes encoding proteasome subunits. In terms of biological role, CNC-type bZIP family transcription factor that translocates to the nucleus and regulates expression of target genes in response to various stresses. Heterodimerizes with small-Maf proteins (MAFF, MAFG or MAFK) and binds DNA motifs including the antioxidant response elements (AREs), which regulate expression of genes involved in oxidative stress response. Activates or represses expression of target genes, depending on the context. Plays a key role in cholesterol homeostasis by acting as a sensor of cholesterol excess: in low cholesterol conditions, translocates into the nucleus and represses expression of genes involved in defense against cholesterol excess, such as CD36. In excess cholesterol conditions, the endoplasmic reticulum membrane form of the protein directly binds cholesterol via its CRAC motif, preventing cleavage and release of the transcription factor NRF1, thereby allowing expression of genes promoting cholesterol removal. Critical for redox balance in response to oxidative stress: acts by binding the AREs motifs on promoters and mediating activation of oxidative stress response genes, such as GCLC, GCLM, GSS, MT1 and MT2. Plays an essential role during fetal liver hematopoiesis: probably has a protective function against oxidative stress and is involved in lipid homeostasis in the liver. Involved in proteasome homeostasis: in response to proteasome inhibition, mediates the 'bounce-back' of proteasome subunits by translocating into the nucleus and activating expression of genes encoding proteasome subunits. Also involved in regulating glucose flux. Together with CEBPB; represses expression of DSPP during odontoblast differentiation. In response to ascorbic acid induction, activates expression of SP7/Osterix in osteoblasts. This chain is Endoplasmic reticulum membrane sensor NFE2L1 (NFE2L1), found in Homo sapiens (Human).